The primary structure comprises 477 residues: Glycogen synthase (477 aa).

Lys-15 contributes to the ADP-alpha-D-glucose binding site.

The protein belongs to the glycosyltransferase 1 family. Bacterial/plant glycogen synthase subfamily.

The catalysed reaction is [(1-&gt;4)-alpha-D-glucosyl](n) + ADP-alpha-D-glucose = [(1-&gt;4)-alpha-D-glucosyl](n+1) + ADP + H(+). Its pathway is glycan biosynthesis; glycogen biosynthesis. Its function is as follows. Synthesizes alpha-1,4-glucan chains using ADP-glucose. The sequence is that of Glycogen synthase from Streptococcus pneumoniae serotype 4 (strain ATCC BAA-334 / TIGR4).